Consider the following 324-residue polypeptide: Calpain-2 catalytic subunit (324 aa).

The segment at 1-138 (YPNTFWMNPQ…KKADYQVVDD (138 aa)) is domain III. Positions 139-153 (EIEADLEENDASEDD) are linker. Positions 158-324 (FRRLFAQLAG…LISWLCFSVL (167 aa)) are domain IV. Ca(2+) contacts are provided by Ala-166, Asp-169, Glu-171, Glu-176, Asp-209, Asp-211, Ser-213, Lys-215, Glu-220, Asp-239, Asp-241, Ser-243, Thr-245, Glu-250, Asp-282, and Asn-285. EF-hand domains are found at residues 190-224 (DIKS…FYIL) and 226-261 (TKIQ…AGFK).

It belongs to the peptidase C2 family. In terms of assembly, forms a heterodimer with a small (regulatory) subunit (CAPNS1). Interacts with CPEB3; this leads to cleavage of CPEB3. Ca(2+) serves as cofactor. Ubiquitous.

Its subcellular location is the cytoplasm. The protein localises to the cell membrane. It catalyses the reaction Broad endopeptidase specificity.. Activated by 200-1000 micromolar concentrations of calcium and inhibited by calpastatin. Calcium-regulated non-lysosomal thiol-protease which catalyzes limited proteolysis of substrates involved in cytoskeletal remodeling and signal transduction. Proteolytically cleaves MYOC at 'Arg-226'. Proteolytically cleaves CPEB3 following neuronal stimulation which abolishes CPEB3 translational repressor activity, leading to translation of CPEB3 target mRNAs. This is Calpain-2 catalytic subunit (CAPN2) from Sus scrofa (Pig).